The chain runs to 549 residues: CTP synthase (549 aa).

Positions 1 to 267 (MTKFVFVTGG…AAQVLSLLNL (267 aa)) are amidoligase domain. Serine 13 lines the CTP pocket. A UTP-binding site is contributed by serine 13. Residues 14-19 (SIGKGI) and aspartate 71 contribute to the ATP site. The Mg(2+) site is built by aspartate 71 and glutamate 141. CTP-binding positions include 148-150 (DIE), 188-193 (KTKPTQ), and lysine 224. Residues 188–193 (KTKPTQ) and lysine 224 contribute to the UTP site. One can recognise a Glutamine amidotransferase type-1 domain in the interval 292–534 (EIAIVGKYVR…VQAARTHSSD (243 aa)). L-glutamine is bound at residue glycine 354. Cysteine 381 serves as the catalytic Nucleophile; for glutamine hydrolysis. L-glutamine is bound by residues 382 to 385 (LGMQ), glutamate 405, and arginine 462. Catalysis depends on residues histidine 507 and glutamate 509.

The protein belongs to the CTP synthase family. In terms of assembly, homotetramer.

It carries out the reaction UTP + L-glutamine + ATP + H2O = CTP + L-glutamate + ADP + phosphate + 2 H(+). The enzyme catalyses L-glutamine + H2O = L-glutamate + NH4(+). It catalyses the reaction UTP + NH4(+) + ATP = CTP + ADP + phosphate + 2 H(+). It functions in the pathway pyrimidine metabolism; CTP biosynthesis via de novo pathway; CTP from UDP: step 2/2. Its activity is regulated as follows. Allosterically activated by GTP, when glutamine is the substrate; GTP has no effect on the reaction when ammonia is the substrate. The allosteric effector GTP functions by stabilizing the protein conformation that binds the tetrahedral intermediate(s) formed during glutamine hydrolysis. Inhibited by the product CTP, via allosteric rather than competitive inhibition. Functionally, catalyzes the ATP-dependent amination of UTP to CTP with either L-glutamine or ammonia as the source of nitrogen. Regulates intracellular CTP levels through interactions with the four ribonucleotide triphosphates. This chain is CTP synthase, found in Cyanothece sp. (strain PCC 7425 / ATCC 29141).